Reading from the N-terminus, the 248-residue chain is Probable uridine-cytidine kinase (248 aa).

Residue 15–23 (GGTSCGKST) participates in ATP binding. Residues aspartate 73, tyrosine 101, arginine 154, arginine 164, and glutamine 172 each coordinate substrate. Aspartate 201 contacts ATP. Positions 224 to 248 (SDEEEEKENELVKQGSFRRPFSRPH) are disordered.

This sequence belongs to the uridine kinase family.

It carries out the reaction uridine + ATP = UMP + ADP + H(+). The enzyme catalyses cytidine + ATP = CMP + ADP + H(+). Its pathway is pyrimidine metabolism; CTP biosynthesis via salvage pathway; CTP from cytidine: step 1/3. It functions in the pathway pyrimidine metabolism; UMP biosynthesis via salvage pathway; UMP from uridine: step 1/1. The chain is Probable uridine-cytidine kinase from Caenorhabditis elegans.